The sequence spans 918 residues: Chaperone protein ClpC1, chloroplastic (918 aa).

Residues 88 to 230 (FERFTEKAIK…RTQVIRMVGE (143 aa)) enclose the Clp R domain. Repeat stretches follow at residues 91–156 (FTEK…IGRG) and 166–230 (FTPR…MVGE). Residues 251–498 (LEEYGTNLTK…RVRLRHAQLP (248 aa)) are i. An ATP-binding site is contributed by 296 to 303 (GEPGVGKT). Positions 505 to 540 (DKELRQVTKDKNEAVRGQDFEKAGELRDREMELKAQ) constitute a UVR domain. The segment at 565–756 (VTEADIQHIV…LLIMTSNVGS (192 aa)) is II. 639–646 (GPTGVGKS) contributes to the ATP binding site.

This sequence belongs to the ClpA/ClpB family. ClpC subfamily. As to expression, widely expressed.

The protein localises to the plastid. The protein resides in the chloroplast. Functionally, molecular chaperone that may interact with a ClpP-like protease involved in degradation of denatured proteins in the chloroplast. The sequence is that of Chaperone protein ClpC1, chloroplastic (CLPC1) from Oryza sativa subsp. japonica (Rice).